Here is a 431-residue protein sequence, read N- to C-terminus: Enolase (431 aa).

Gln-167 is a (2R)-2-phosphoglycerate binding site. The active-site Proton donor is Glu-209. Mg(2+) contacts are provided by Asp-246, Glu-289, and Asp-316. (2R)-2-phosphoglycerate is bound by residues Lys-341, Arg-370, Ser-371, and Lys-392. Lys-341 (proton acceptor) is an active-site residue.

The protein belongs to the enolase family. In terms of assembly, component of the RNA degradosome, a multiprotein complex involved in RNA processing and mRNA degradation. It depends on Mg(2+) as a cofactor.

The protein localises to the cytoplasm. It localises to the secreted. Its subcellular location is the cell surface. It catalyses the reaction (2R)-2-phosphoglycerate = phosphoenolpyruvate + H2O. It participates in carbohydrate degradation; glycolysis; pyruvate from D-glyceraldehyde 3-phosphate: step 4/5. In terms of biological role, catalyzes the reversible conversion of 2-phosphoglycerate (2-PG) into phosphoenolpyruvate (PEP). It is essential for the degradation of carbohydrates via glycolysis. This chain is Enolase, found in Shewanella sp. (strain MR-4).